The primary structure comprises 428 residues: Serine--tRNA ligase (428 aa).

231 to 233 serves as a coordination point for L-serine; the sequence is TSE. ATP-binding positions include 262–264 and valine 278; that span reads RRE. Residue glutamate 285 coordinates L-serine. Residue 349 to 352 coordinates ATP; that stretch reads ELTS. Threonine 384 is a binding site for L-serine.

This sequence belongs to the class-II aminoacyl-tRNA synthetase family. Type-1 seryl-tRNA synthetase subfamily. Homodimer. The tRNA molecule binds across the dimer.

The protein localises to the cytoplasm. It catalyses the reaction tRNA(Ser) + L-serine + ATP = L-seryl-tRNA(Ser) + AMP + diphosphate + H(+). The enzyme catalyses tRNA(Sec) + L-serine + ATP = L-seryl-tRNA(Sec) + AMP + diphosphate + H(+). It participates in aminoacyl-tRNA biosynthesis; selenocysteinyl-tRNA(Sec) biosynthesis; L-seryl-tRNA(Sec) from L-serine and tRNA(Sec): step 1/1. In terms of biological role, catalyzes the attachment of serine to tRNA(Ser). Is also able to aminoacylate tRNA(Sec) with serine, to form the misacylated tRNA L-seryl-tRNA(Sec), which will be further converted into selenocysteinyl-tRNA(Sec). The protein is Serine--tRNA ligase of Bifidobacterium adolescentis (strain ATCC 15703 / DSM 20083 / NCTC 11814 / E194a).